Consider the following 256-residue polypeptide: Imidazole glycerol phosphate synthase subunit HisF (256 aa).

Catalysis depends on residues aspartate 11 and aspartate 130.

Belongs to the HisA/HisF family. In terms of assembly, heterodimer of HisH and HisF.

Its subcellular location is the cytoplasm. It catalyses the reaction 5-[(5-phospho-1-deoxy-D-ribulos-1-ylimino)methylamino]-1-(5-phospho-beta-D-ribosyl)imidazole-4-carboxamide + L-glutamine = D-erythro-1-(imidazol-4-yl)glycerol 3-phosphate + 5-amino-1-(5-phospho-beta-D-ribosyl)imidazole-4-carboxamide + L-glutamate + H(+). The protein operates within amino-acid biosynthesis; L-histidine biosynthesis; L-histidine from 5-phospho-alpha-D-ribose 1-diphosphate: step 5/9. In terms of biological role, IGPS catalyzes the conversion of PRFAR and glutamine to IGP, AICAR and glutamate. The HisF subunit catalyzes the cyclization activity that produces IGP and AICAR from PRFAR using the ammonia provided by the HisH subunit. The protein is Imidazole glycerol phosphate synthase subunit HisF of Prochlorococcus marinus (strain NATL2A).